Reading from the N-terminus, the 146-residue chain is Extracellular globin-2A (146 aa).

The Globin domain maps to 4 to 146 (HCGPLQRLKV…EVIYPGIKHD (143 aa)). An intrachain disulfide couples Cys5 to Cys134. His97 contacts heme b.

This sequence belongs to the globin family. Disulfide bonded trimer of chains IIA, IIB, and IIC.

The protein is Extracellular globin-2A of Tylorrhynchus heterochetus (Japanese palolo worm).